Consider the following 396-residue polypeptide: Elongation factor Tu (396 aa).

The tr-type G domain occupies Lys10–Glu206. Positions Gly19–Thr26 are G1. Gly19–Thr26 provides a ligand contact to GTP. Thr26 provides a ligand contact to Mg(2+). The G2 stretch occupies residues Gly60 to Ser64. The G3 stretch occupies residues Asp81 to Gly84. GTP-binding positions include Asp81–His85 and Asn136–Asp139. The tract at residues Asn136–Asp139 is G4. The tract at residues Ser174 to Leu176 is G5.

Belongs to the TRAFAC class translation factor GTPase superfamily. Classic translation factor GTPase family. EF-Tu/EF-1A subfamily. In terms of assembly, monomer.

The protein resides in the cytoplasm. It carries out the reaction GTP + H2O = GDP + phosphate + H(+). GTP hydrolase that promotes the GTP-dependent binding of aminoacyl-tRNA to the A-site of ribosomes during protein biosynthesis. This Parvibaculum lavamentivorans (strain DS-1 / DSM 13023 / NCIMB 13966) protein is Elongation factor Tu.